A 270-amino-acid polypeptide reads, in one-letter code: Protein ABHD14A (270 aa).

The helical; Signal-anchor for type II membrane protein transmembrane segment at leucine 9–methionine 29 threads the bilayer. Asparagine 61 carries an N-linked (GlcNAc...) asparagine glycan. Catalysis depends on charge relay system residues serine 170 and aspartate 221. N-linked (GlcNAc...) asparagine glycosylation is present at asparagine 237. Histidine 248 acts as the Charge relay system in catalysis.

It belongs to the AB hydrolase superfamily. ABHD14 family.

Its subcellular location is the cytoplasm. It localises to the membrane. Its function is as follows. Possible role in granule neuron development. The chain is Protein ABHD14A from Danio rerio (Zebrafish).